We begin with the raw amino-acid sequence, 601 residues long: Putative pentatricopeptide repeat-containing protein At3g25060, mitochondrial (601 aa).

The transit peptide at 1-80 (MVQTKHFCML…KVFDELPQRG (80 aa)) directs the protein to the mitochondrion. PPR repeat units follow at residues 49–79 (GSSISRDLIASCGRIGEISYARKVFDELPQR), 80–114 (GVSVYNSMIVVYSRGKNPDEVLRLYDQMIAEKIQP), 115–149 (DSSTFTMTIKACLSGLVLEKGEAVWCKAVDFGYKN), 150–180 (DVFVCSSVLNLYMKCGKMDEAEVLFGKMAKR), 181–215 (DVICWTTMVTGFAQAGKSLKAVEFYREMQNEGFGR), 216–250 (DRVVMLGLLQASGDLGDTKMGRSVHGYLYRTGLPM), 251–281 (NVVVETSLVDMYAKVGFIEVASRVFSRMMFK), 282–316 (TAVSWGSLISGFAQNGLANKAFEAVVEMQSLGFQP), 317–347 (DLVTLVGVLVACSQVGSLKTGRLVHCYILKR), 351–381 (DRVTATALMDMYSKCGALSSSREIFEHVGRK), 382–416 (DLVCWNTMISCYGIHGNGQEVVSLFLKMTESNIEP), 417–452 (DHATFASLLSALSHSGLVEQGQHWFSVMINKYKIQP), and 453–487 (SEKHYVCLIDLLARAGRVEEALDMINSEKLDNALP). The segment at 488–563 (IWVALLSGCI…VPGYSAIEVN (76 aa)) is type E motif. The interval 564-594 (GELRTFLMEDLSHHEHYHMLQVLRNLKTEIR) is type E(+) motif.

Belongs to the PPR family. PCMP-E subfamily.

It is found in the mitochondrion. The chain is Putative pentatricopeptide repeat-containing protein At3g25060, mitochondrial (PCMP-E96) from Arabidopsis thaliana (Mouse-ear cress).